Reading from the N-terminus, the 641-residue chain is Chaperone protein HtpG (641 aa).

The tract at residues Met-1–Arg-351 is a; substrate-binding. The tract at residues Glu-352 to Lys-568 is b. Residues Leu-569–Ala-641 are c.

This sequence belongs to the heat shock protein 90 family. In terms of assembly, homodimer.

It localises to the cytoplasm. Molecular chaperone. Has ATPase activity. The sequence is that of Chaperone protein HtpG from Aeromonas hydrophila subsp. hydrophila (strain ATCC 7966 / DSM 30187 / BCRC 13018 / CCUG 14551 / JCM 1027 / KCTC 2358 / NCIMB 9240 / NCTC 8049).